A 293-amino-acid chain; its full sequence is Foldase protein PrsA 2 (293 aa).

Positions 1-20 are cleaved as a signal peptide; the sequence is MKKKLILGLVMMMALFSLAA. A lipid anchor (N-palmitoyl cysteine) is attached at Cys-21. Cys-21 is lipidated: S-diacylglycerol cysteine. Residues 135-226 enclose the PpiC domain; the sequence is QPDITVSHIL…YGYHIIQMDK (92 aa).

It belongs to the PrsA family.

Its subcellular location is the cell membrane. It carries out the reaction [protein]-peptidylproline (omega=180) = [protein]-peptidylproline (omega=0). In terms of biological role, plays a major role in protein secretion by helping the post-translocational extracellular folding of several secreted proteins. In Listeria monocytogenes serotype 4b (strain F2365), this protein is Foldase protein PrsA 2.